Consider the following 196-residue polypeptide: dCTP deaminase, dUMP-forming (196 aa).

DCTP is bound by residues 101-106, D119, 127-129, Q148, Y162, and Q174; these read KSSLGR and TLE. The active-site Proton donor/acceptor is E129.

The protein belongs to the dCTP deaminase family. As to quaternary structure, homotrimer.

It carries out the reaction dCTP + 2 H2O = dUMP + NH4(+) + diphosphate. The protein operates within pyrimidine metabolism; dUMP biosynthesis; dUMP from dCTP: step 1/1. Functionally, bifunctional enzyme that catalyzes both the deamination of dCTP to dUTP and the hydrolysis of dUTP to dUMP without releasing the toxic dUTP intermediate. This chain is dCTP deaminase, dUMP-forming, found in Thermobifida fusca (strain YX).